The chain runs to 183 residues: NAD(P)H-quinone oxidoreductase subunit I, chloroplastic (183 aa).

2 4Fe-4S ferredoxin-type domains span residues 55–84 (GRIH…VDWK) and 95–124 (KSYS…MTEE). [4Fe-4S] cluster contacts are provided by Cys64, Cys67, Cys70, Cys74, Cys104, Cys107, Cys110, and Cys114.

The protein belongs to the complex I 23 kDa subunit family. As to quaternary structure, NDH is composed of at least 16 different subunits, 5 of which are encoded in the nucleus. The cofactor is [4Fe-4S] cluster.

Its subcellular location is the plastid. The protein resides in the chloroplast thylakoid membrane. The catalysed reaction is a plastoquinone + NADH + (n+1) H(+)(in) = a plastoquinol + NAD(+) + n H(+)(out). The enzyme catalyses a plastoquinone + NADPH + (n+1) H(+)(in) = a plastoquinol + NADP(+) + n H(+)(out). In terms of biological role, NDH shuttles electrons from NAD(P)H:plastoquinone, via FMN and iron-sulfur (Fe-S) centers, to quinones in the photosynthetic chain and possibly in a chloroplast respiratory chain. The immediate electron acceptor for the enzyme in this species is believed to be plastoquinone. Couples the redox reaction to proton translocation, and thus conserves the redox energy in a proton gradient. The polypeptide is NAD(P)H-quinone oxidoreductase subunit I, chloroplastic (Anthoceros angustus (Hornwort)).